We begin with the raw amino-acid sequence, 311 residues long: Formimidoylglutamase (311 aa).

Mn(2+) is bound by residues histidine 130, aspartate 155, histidine 157, aspartate 159, cysteine 242, and aspartate 244.

This sequence belongs to the arginase family. It depends on Mn(2+) as a cofactor.

It carries out the reaction N-formimidoyl-L-glutamate + H2O = formamide + L-glutamate. The protein operates within amino-acid degradation; L-histidine degradation into L-glutamate; L-glutamate from N-formimidoyl-L-glutamate (hydrolase route): step 1/1. Catalyzes the conversion of N-formimidoyl-L-glutamate to L-glutamate and formamide. This is Formimidoylglutamase from Staphylococcus aureus (strain MRSA252).